We begin with the raw amino-acid sequence, 259 residues long: Emerin (259 aa).

At M1 the chain carries N-acetylmethionine. An LEM domain is found at 1 to 45; that stretch reads MDDYAVLSDTELAAVLRQYNIPHGPIVGSTRKLYEKKIFEYETQR. Residues S8, S29, S54, S72, S88, S99, S141, and S142 each carry the phosphoserine modification. The interval 46–223 is interaction with F-actin; sequence RRLLPPNSSS…PAAALGQDRQ (178 aa). Y161 bears the Phosphotyrosine mark. The interaction with CTNNB1 stretch occupies residues 168-187; it reads RPISNVSRSSLGLSYYPTSS. Phosphoserine is present on residues S171, S174, and S176. The chain crosses the membrane as a helical span at residues 224–244; sequence VPLWGQLLLFLVFAAFLLFVY.

Interacts with lamins A and C, BANF1, GMCL, BCLAF1 and YTHDC1/YT521. Interacts with TMEM43; the interaction retains emerin in the inner nuclear membrane. Interacts with ACTB, SPTAN1, F-actin, CTNNB1 and beta-tubulin. Interacts with SUN1 and SUN2. Interacts with TMEM201. Interacts with NEMP1. In terms of tissue distribution, in the ovary, highest expression is seen in primordial follicle oocytes (at protein level). Detected in embryonic fibroblasts, skeletal muscle, heart muscle and tongue epithelium (at protein level). Widely expressed.

It localises to the nucleus inner membrane. It is found in the nucleus outer membrane. In terms of biological role, stabilizes and promotes the formation of a nuclear actin cortical network. Stimulates actin polymerization in vitro by binding and stabilizing the pointed end of growing filaments. Inhibits beta-catenin activity by preventing its accumulation in the nucleus. Acts by influencing the nuclear accumulation of beta-catenin through a CRM1-dependent export pathway. Links centrosomes to the nuclear envelope via a microtubule association. Required for proper localization of non-farnesylated prelamin-A/C. Together with NEMP1, contributes to nuclear envelope stiffness in germ cells. This chain is Emerin (Emd), found in Mus musculus (Mouse).